The chain runs to 177 residues: Probable prophage lysozyme (177 aa).

Glu-35 acts as the Proton donor in catalysis. Asp-44 serves as the catalytic Nucleophile.

The protein belongs to the glycosyl hydrolase 24 family.

The enzyme catalyses Hydrolysis of (1-&gt;4)-beta-linkages between N-acetylmuramic acid and N-acetyl-D-glucosamine residues in a peptidoglycan and between N-acetyl-D-glucosamine residues in chitodextrins.. Its function is as follows. Essential for lysis of bacterial cell wall, by showing cell wall hydrolyzing activity. The polypeptide is Probable prophage lysozyme (rrrQ) (Escherichia coli (strain K12)).